Here is a 392-residue protein sequence, read N- to C-terminus: Alanine--glyoxylate aminotransferase (392 aa).

Lys-209 carries the N6-(pyridoxal phosphate)lysine modification. Lys-225 is modified (N6-acetyllysine; alternate). Residue Lys-225 is modified to N6-succinyllysine; alternate. 2 positions are modified to N6-acetyllysine: Lys-234 and Lys-312. Arg-360 provides a ligand contact to substrate. The Microbody targeting signal signature appears at 390-392 (SQL).

It belongs to the class-V pyridoxal-phosphate-dependent aminotransferase family. In terms of assembly, homodimer. Requires pyridoxal 5'-phosphate as cofactor.

It localises to the peroxisome. The catalysed reaction is L-serine + pyruvate = 3-hydroxypyruvate + L-alanine. It catalyses the reaction glyoxylate + L-alanine = glycine + pyruvate. Functionally, peroxisomal aminotransferase that catalyzes the transamination of glyoxylate to glycine and contributes to the glyoxylate detoxification. Also catalyzes the transamination between L-serine and pyruvate and contributes to gluconeogenesis from the L-serine metabolism. The polypeptide is Alanine--glyoxylate aminotransferase (Oryctolagus cuniculus (Rabbit)).